Here is a 383-residue protein sequence, read N- to C-terminus: Homeobox protein SHOOT MERISTEMLESS (383 aa).

The interval His-37–Tyr-58 is disordered. In terms of domain architecture, ELK spans Glu-263 to Phe-283. Positions Met-284 to Ser-347 form a DNA-binding region, homeobox; TALE-type.

The protein belongs to the TALE/KNOX homeobox family.

The protein localises to the nucleus. Its function is as follows. Required for shoot apical meristem formation during embryogenesis. Probably binds to the DNA sequence 5'-TGAC-3'. This is Homeobox protein SHOOT MERISTEMLESS (STM) from Brassica oleracea (Wild cabbage).